We begin with the raw amino-acid sequence, 30 residues long: Peptidase 1 (30 aa).

This sequence belongs to the peptidase C1 family.

The protein resides in the secreted. The catalysed reaction is Broad endopeptidase specificity.. Thiol protease that hydrolyzes proteins, with a preference for Phe or basic residues. The protein is Peptidase 1 (DERM1) of Dermatophagoides microceras (House dust mite).